Here is a 291-residue protein sequence, read N- to C-terminus: Lectin (291 aa).

The signal sequence occupies residues 1 to 28; that stretch reads MGISKKSQLVPLLAFITMFLMVVSRVSS. Residue Asp-118 coordinates Ca(2+). Arg-138 lines the a carbohydrate pocket. Residues 147–162 constitute a propeptide, removed in mature form; sequence NIIKNSTNLDFNAAYN. Mn(2+) contacts are provided by Glu-170 and Asp-172. Positions 172, 174, 176, and 181 each coordinate Ca(2+). Tyr-174 provides a ligand contact to a carbohydrate. Mn(2+) is bound by residues Asp-181 and His-186. Residue Lys-208 coordinates Ca(2+). Position 228 (Ser-228) interacts with a carbohydrate. A propeptide spans 281-291 (removed in mature form); that stretch reads QLQDLRIASVV.

It belongs to the leguminous lectin family. Post-translationally, the mature chain consists of residues 163-280 followed by residues 29-147. Concanavalin A-like lectins of the Diocleinae subtribe undergo proteolytic processing referred to as circular permutation. The propeptide is split into an N-terminal and a C-terminal part, the gamma and beta chain, respectively. These are then religated in beta-gamma order to form the mature alpha chain. The beta and gamma chains can often be detected in cell extracts.

Functionally, D-mannose-binding lectin that also binds alpha-methyl-D-mannoside with even higher affinity. Has hemagglutinating activity against rabbit erythrocytes. Shows toxicity against the brine shrimp A.nauplii. Induces reversible paw edema and hypernociceptivity in rats. The protein is Lectin of Dioclea lasiophylla.